The sequence spans 102 residues: Nucleoid-associated protein WS1681 (102 aa).

Belongs to the YbaB/EbfC family. In terms of assembly, homodimer.

The protein localises to the cytoplasm. It is found in the nucleoid. Functionally, binds to DNA and alters its conformation. May be involved in regulation of gene expression, nucleoid organization and DNA protection. This chain is Nucleoid-associated protein WS1681, found in Wolinella succinogenes (strain ATCC 29543 / DSM 1740 / CCUG 13145 / JCM 31913 / LMG 7466 / NCTC 11488 / FDC 602W) (Vibrio succinogenes).